The following is a 204-amino-acid chain: MSFDNYLVPTVIEQSGRGERAFDIYSRLLKERIVFLVGPVTDESANLVVAQLLFLESENPDKDIFFYINSPGGSVTAGMSIYDTMNFIKPDVSTLCLGQAASMGAFLLSAGEKGKRFALPNSRIMIHQPLISGGLGGQASDIEIHARELLKIKEKLNRLMAKHCGRDLADLERDTDRDNFMSAEEAKEYGLIDQILENRASLQF.

Residue Ser102 is the Nucleophile of the active site. His127 is an active-site residue.

It belongs to the peptidase S14 family. Fourteen ClpP subunits assemble into 2 heptameric rings which stack back to back to give a disk-like structure with a central cavity, resembling the structure of eukaryotic proteasomes.

It localises to the cytoplasm. It carries out the reaction Hydrolysis of proteins to small peptides in the presence of ATP and magnesium. alpha-casein is the usual test substrate. In the absence of ATP, only oligopeptides shorter than five residues are hydrolyzed (such as succinyl-Leu-Tyr-|-NHMec, and Leu-Tyr-Leu-|-Tyr-Trp, in which cleavage of the -Tyr-|-Leu- and -Tyr-|-Trp bonds also occurs).. Functionally, cleaves peptides in various proteins in a process that requires ATP hydrolysis. Has a chymotrypsin-like activity. Plays a major role in the degradation of misfolded proteins. This chain is ATP-dependent Clp protease proteolytic subunit, found in Neisseria meningitidis serogroup C (strain 053442).